The sequence spans 180 residues: Crossover junction endodeoxyribonuclease RuvC (180 aa).

Catalysis depends on residues Asp-9, Glu-74, and Asp-146. 3 residues coordinate Mg(2+): Asp-9, Glu-74, and Asp-146.

It belongs to the RuvC family. In terms of assembly, homodimer which binds Holliday junction (HJ) DNA. The HJ becomes 2-fold symmetrical on binding to RuvC with unstacked arms; it has a different conformation from HJ DNA in complex with RuvA. In the full resolvosome a probable DNA-RuvA(4)-RuvB(12)-RuvC(2) complex forms which resolves the HJ. Mg(2+) serves as cofactor.

Its subcellular location is the cytoplasm. The catalysed reaction is Endonucleolytic cleavage at a junction such as a reciprocal single-stranded crossover between two homologous DNA duplexes (Holliday junction).. In terms of biological role, the RuvA-RuvB-RuvC complex processes Holliday junction (HJ) DNA during genetic recombination and DNA repair. Endonuclease that resolves HJ intermediates. Cleaves cruciform DNA by making single-stranded nicks across the HJ at symmetrical positions within the homologous arms, yielding a 5'-phosphate and a 3'-hydroxyl group; requires a central core of homology in the junction. The consensus cleavage sequence is 5'-(A/T)TT(C/G)-3'. Cleavage occurs on the 3'-side of the TT dinucleotide at the point of strand exchange. HJ branch migration catalyzed by RuvA-RuvB allows RuvC to scan DNA until it finds its consensus sequence, where it cleaves and resolves the cruciform DNA. This is Crossover junction endodeoxyribonuclease RuvC from Methylobacillus flagellatus (strain ATCC 51484 / DSM 6875 / VKM B-1610 / KT).